Consider the following 402-residue polypeptide: Elongation factor Tu (402 aa).

The tr-type G domain maps to 16 to 211 (KEHINIGTIG…AVDSYIDSPV (196 aa)). Residues 25-32 (GHVDHGKT) are G1. 25-32 (GHVDHGKT) contributes to the GTP binding site. Threonine 32 is a binding site for Mg(2+). The tract at residues 66 to 70 (GITIN) is G2. The interval 87–90 (DCPG) is G3. GTP contacts are provided by residues 87–91 (DCPGH) and 142–145 (NKID). The interval 142–145 (NKID) is G4. Positions 181 to 183 (SAR) are G5.

The protein belongs to the TRAFAC class translation factor GTPase superfamily. Classic translation factor GTPase family. EF-Tu/EF-1A subfamily. As to quaternary structure, monomer.

The protein localises to the cytoplasm. The enzyme catalyses GTP + H2O = GDP + phosphate + H(+). Its function is as follows. GTP hydrolase that promotes the GTP-dependent binding of aminoacyl-tRNA to the A-site of ribosomes during protein biosynthesis. In Mesomycoplasma hyopneumoniae (strain 232) (Mycoplasma hyopneumoniae), this protein is Elongation factor Tu.